Here is a 1151-residue protein sequence, read N- to C-terminus: MNLEFSFGNLIAKNTENSTKEEGTWEVNKLMKFSSEEGRSSSDDYMFSSPDFEKAGNGDAEMREFFNFDGLPDQGLNLPSIAPPSLSHASSPNLSNSQDEAECLPSDRQQDYINPSLHLNRTVFPTPQHSISDANFLANTVDQPLGDNPMFGESDVYLLKMDPMKQAPYEAGFNSVKSSGAIEDPLQFRQPITMLETPFNESINTLTPYAEDYAFSSLNTSAPPLSNKEYAFSVNHLPAINEHKWKSRVETNMLFELRIKSNDNQSVPFEYLRLPSWAHREDKKRSSKPQPLQPDPETVIHLVPTVLAGDKSSVVKTCCTRCLLRERKRNARSQATKDACMPNYTKLKAYERNMTDASPEEKQQFRIKLLNQFPKLEDIDEDRMIMVFTGPEYVRLQLDGNERVAHINARITCYSSHQSCPYFHIIWDLYSMSRLVDRLVFPEPVTVLDDHKSRNLTKSEKTGKSNSQQAPSNHVLSKSNTVPNLVTGFPTRSDNPPNEKRRRTSSSENSRALDIQLSASDSHSPNSKSTLKSVEGSAFSMSKSPSVLSMTTPSGVSPSISKNGFHVVRVPSDAAGFQQRQQQEEGVLEAHTNESAPIAPFPYCTDDFSFSVEEKSSVNNLLTQFDEVAKPDFVSTPIKENVDSSFINMTPPDVSHAPLISRIIPNKGSIMGGYEVTILGANFFNGLVCLFGDNPAAVTFSWSESTIIATCPPATNAGTVPVTFQNYNSSSEAPVMFTYEDNLDNELYKLTVQVLGLKLTGSIQNPLTLSKKLLSSWRDDFAQYITNSIKQPPNSESKGQSKKTLLHDSNMESLKSVISRIVKKDSNQSDDSVESTILAAFALVTDTTTPYLSDFSLVNESGRSLLHLTAACGLSNASTFLCNAGCDVNKRDALGYTPLHYASLYDHKDICVNLLSNGAKPDVIGASGKKPIDLSSSEPIKLVFKEANNEQAQSISRSLIKDSEGSINTNETLESTSIVNEIEESAVQTKSYSESMWNKTVTMFPSLQELPQNYMSEVPSMMQKAMLSTLKSISAIPDDVPPPYSEFADDTTAQAGSSKRDSAISEDPDHHKSVWWSLRWQSRLVGRGKSTALTPEETRAIQEQAKTLKKAGMDFMLFSFWLPALLLLSIFGLRSYAQMIGGYLYRCIIGI.

Disordered stretches follow at residues 77 to 104, 452 to 511, and 516 to 535; these read NLPS…AECL, KSRN…ENSR, and QLSA…KSVE. Polar residues predominate over residues 87-98; sequence SHASSPNLSNSQ. Basic and acidic residues predominate over residues 452-463; that stretch reads KSRNLTKSEKTG. Polar residues-rich tracts occupy residues 464-496 and 517-532; these read KSNS…SDNP and LSAS…STLK. Residues 658 to 739 enclose the IPT/TIG domain; the sequence is PLISRIIPNK…SSEAPVMFTY (82 aa). ANK repeat units lie at residues 861 to 890 and 894 to 923; these read SGRS…DVNK and LGYT…KPDV. Residues 1041–1067 form a disordered region; it reads PPPYSEFADDTTAQAGSSKRDSAISED. The segment covering 1058-1067 has biased composition (basic and acidic residues); sequence SKRDSAISED. The helical transmembrane segment at 1113–1133 threads the bilayer; it reads MDFMLFSFWLPALLLLSIFGL.

Its subcellular location is the vacuole membrane. The sequence is that of Ankyrin and IPT/TIG repeat-containing protein C26H5.05 from Schizosaccharomyces pombe (strain 972 / ATCC 24843) (Fission yeast).